Reading from the N-terminus, the 319-residue chain is Homeobox protein Hox-B5a (319 aa).

The disordered stretch occupies residues 114-224 (SLLSPGSGDT…NTVGSEGQPP (111 aa)). Over residues 128-155 (RSSSPRSEQSGSGNLSSTNLSSSTNISS) the composition is skewed to low complexity. Positions 226-231 (IFPWMR) match the Antp-type hexapeptide motif. A DNA-binding region (homeobox) is located at residues 244–303 (GKRARTAYTRYQTLELEKEFHFNRYLTRRRRIEIAHALCLTERQIKIWFQNRRMKWKKDN).

The protein belongs to the Antp homeobox family.

It is found in the nucleus. Sequence-specific transcription factor which is part of a developmental regulatory system that provides cells with specific positional identities on the anterior-posterior axis. This chain is Homeobox protein Hox-B5a (hoxb5a), found in Takifugu rubripes (Japanese pufferfish).